A 428-amino-acid polypeptide reads, in one-letter code: Histone deacetylase 3 (428 aa).

The interval 3–316 is histone deacetylase; the sequence is KTVAYFYDPD…WTYETSLLVE (314 aa). The 1D-myo-inositol 1,4,5,6-tetrakisphosphate site is built by H17, G21, and K25. The active site involves H135. D170, H172, and D259 together coordinate Zn(2+). R265 is a 1D-myo-inositol 1,4,5,6-tetrakisphosphate binding site. Composition is skewed to basic and acidic residues over residues 388-405 and 415-428; these read DRTD…ENYS and DGDH…DVEI. The segment at 388 to 428 is disordered; that stretch reads DRTDEADAEERGPEENYSRPEAPNEFYDGDHDNDKESDVEI. Position 424 is a phosphoserine (S424).

This sequence belongs to the histone deacetylase family. HD type 1 subfamily. Interacts with HDAC7 and HDAC9. Interacts with DAXX, KDM4A, HDAC10 and DACH1. Found in a complex with NCOR1 and NCOR2. Component of the N-Cor repressor complex, at least composed of NCOR1, NCOR2, HDAC3, TBL1X, TBL1R, CORO2A and GPS2. Interacts with BCOR, MJD2A/JHDM3A, NRIP1, PRDM6 and SRY. Interacts with BTBD14B. Interacts with GLIS2. Interacts (via the DNA-binding domain) with NR2C1; the interaction recruits phosphorylated NR2C1 to PML bodies for sumoylation. Component of the Notch corepressor complex. Interacts with CBFA2T3 and NKAP. Interacts with APEX1; the interaction is not dependent on the acetylated status of APEX1. Interacts with ZMYND15. Interacts with SMRT/NCOR2 and BCL6 on DNA enhancer elements. Interacts with INSM1. Interacts with XBP1 isoform 1; the interaction occurs in endothelial cell (EC) under disturbed flow. Interacts (via C-terminus) with CCAR2 (via N-terminus). Interacts with and deacetylates MEF2D. Interacts with BEND3. Interacts with NKAPL. Interacts with DHX36; this interaction occurs in a RNA-dependent manner. Interacts weakly with CRY1; this interaction is enhanced in the presence of FBXL3. Interacts with FBXL3 and BMAL1. Interacts with NCOR1. Interacts with RARA. Interacts with SETD5. Post-translationally, sumoylated in vitro. In terms of processing, deubiquitinated on 'Lys-63'-linked ubiquitin chains by USP38; leading to a decreased level of histone acetylation.

The protein resides in the nucleus. It localises to the chromosome. It is found in the cytoplasm. The protein localises to the cytosol. It catalyses the reaction N(6)-acetyl-L-lysyl-[histone] + H2O = L-lysyl-[histone] + acetate. The enzyme catalyses N(6)-acetyl-L-lysyl-[protein] + H2O = L-lysyl-[protein] + acetate. It carries out the reaction N(6)-(2E)-butenoyl-L-lysyl-[protein] + H2O = (2E)-2-butenoate + L-lysyl-[protein]. The catalysed reaction is N(6)-(2-hydroxyisobutanoyl)-L-lysyl-[protein] + H2O = 2-hydroxy-2-methylpropanoate + L-lysyl-[protein]. It catalyses the reaction N(6)-[(S)-lactoyl]-L-lysyl-[protein] + H2O = (S)-lactate + L-lysyl-[protein]. With respect to regulation, inositol tetraphosphate (1D-myo-inositol 1,4,5,6-tetrakisphosphate) promotes the histone deacetylase activity by acting as an intermolecular glue between HDAC3 and NCOR2, thereby promoting its association with the N-Cor complex, a prerequisite for the histone deacetylase activity. Its function is as follows. Histone deacetylase that catalyzes the deacetylation of lysine residues on the N-terminal part of the core histones (H2A, H2B, H3 and H4), and some other non-histone substrates. Histone deacetylation gives a tag for epigenetic repression and plays an important role in transcriptional regulation, cell cycle progression and developmental events. Histone deacetylases act via the formation of large multiprotein complexes, such as N-Cor repressor complex, which activate the histone deacetylase activity. Participates in the BCL6 transcriptional repressor activity by deacetylating the H3 'Lys-27' (H3K27) on enhancer elements, antagonizing EP300 acetyltransferase activity and repressing proximal gene expression. Acts as a molecular chaperone for shuttling phosphorylated NR2C1 to PML bodies for sumoylation. Contributes, together with XBP1 isoform 1, to the activation of NFE2L2-mediated HMOX1 transcription factor gene expression in a PI(3)K/mTORC2/Akt-dependent signaling pathway leading to endothelial cell (EC) survival under disturbed flow/oxidative stress. Regulates both the transcriptional activation and repression phases of the circadian clock in a deacetylase activity-independent manner. During the activation phase, promotes the accumulation of ubiquitinated BMAL1 at the E-boxes and during the repression phase, blocks FBXL3-mediated CRY1/2 ubiquitination and promotes the interaction of CRY1 and BMAL1. The NCOR1-HDAC3 complex regulates the circadian expression of the core clock gene BMAL1 and the genes involved in lipid metabolism in the liver. Also functions as deacetylase for non-histone targets, such as KAT5, MEF2D, MAPK14, RARA and STAT3. Serves as a corepressor of RARA, mediating its deacetylation and repression, leading to inhibition of RARE DNA element binding. In addition to protein deacetylase activity, also acts as a protein-lysine deacylase by recognizing other acyl groups: catalyzes removal of (2E)-butenoyl (crotonyl), lactoyl (lactyl) and 2-hydroxyisobutanoyl (2-hydroxyisobutyryl) acyl groups from lysine residues, leading to protein decrotonylation, delactylation and de-2-hydroxyisobutyrylation, respectively. Catalyzes decrotonylation of MAPRE1/EB1. Mediates delactylation NBN/NBS1, thereby inhibiting DNA double-strand breaks (DSBs) via homologous recombination (HR). The chain is Histone deacetylase 3 from Mus musculus (Mouse).